A 297-amino-acid chain; its full sequence is Trans-enoyl reductase TOXD (297 aa).

NADP(+) is bound by residues 162-165 (STAT) and tyrosine 203.

It belongs to the zinc-containing alcohol dehydrogenase family. In terms of assembly, monomer.

Its function is as follows. Trans-enoyl reductase; part of the diffuse TOX2 gene cluster that mediates the biosynthesis of the HC-toxin, cyclic tetrapeptide of structure cyclo(D-Pro-L-Ala-D-Ala-L-Aeo), where Aeo stands for 2-amino-9,10-epoxi-8-oxodecanoic acid. HC-toxin is a determinant of specificity and virulence in the interaction between the producing fungus and its host, maize. TOXD does not seem to play a role in HC-toxin biosynthesis. The chain is Trans-enoyl reductase TOXD from Cochliobolus carbonum (Maize leaf spot fungus).